The following is a 572-amino-acid chain: Proline--tRNA ligase (572 aa).

This sequence belongs to the class-II aminoacyl-tRNA synthetase family. ProS type 1 subfamily. Homodimer.

Its subcellular location is the cytoplasm. It carries out the reaction tRNA(Pro) + L-proline + ATP = L-prolyl-tRNA(Pro) + AMP + diphosphate. Functionally, catalyzes the attachment of proline to tRNA(Pro) in a two-step reaction: proline is first activated by ATP to form Pro-AMP and then transferred to the acceptor end of tRNA(Pro). As ProRS can inadvertently accommodate and process non-cognate amino acids such as alanine and cysteine, to avoid such errors it has two additional distinct editing activities against alanine. One activity is designated as 'pretransfer' editing and involves the tRNA(Pro)-independent hydrolysis of activated Ala-AMP. The other activity is designated 'posttransfer' editing and involves deacylation of mischarged Ala-tRNA(Pro). The misacylated Cys-tRNA(Pro) is not edited by ProRS. In Yersinia pestis (strain Pestoides F), this protein is Proline--tRNA ligase.